The sequence spans 183 residues: Shikimate kinase (183 aa).

19-24 (GAGKTT) lines the ATP pocket. Thr23 is a Mg(2+) binding site. Substrate is bound by residues Asp41, Arg65, and Gly87. Residue Arg124 participates in ATP binding. Arg143 provides a ligand contact to substrate.

The protein belongs to the shikimate kinase family. As to quaternary structure, monomer. The cofactor is Mg(2+).

It is found in the cytoplasm. The enzyme catalyses shikimate + ATP = 3-phosphoshikimate + ADP + H(+). The protein operates within metabolic intermediate biosynthesis; chorismate biosynthesis; chorismate from D-erythrose 4-phosphate and phosphoenolpyruvate: step 5/7. Catalyzes the specific phosphorylation of the 3-hydroxyl group of shikimic acid using ATP as a cosubstrate. The protein is Shikimate kinase of Thermosynechococcus vestitus (strain NIES-2133 / IAM M-273 / BP-1).